The following is a 283-amino-acid chain: S-adenosylmethionine mitochondrial carrier protein homolog (283 aa).

Solcar repeat units lie at residues 11-84 (LKFF…GKQF), 93-178 (DSPY…FKLQ), and 187-275 (STPF…TTRI). 6 helical membrane-spanning segments follow: residues 14 to 34 (FHALVAGGVAGMVVDIALFPI), 55 to 75 (GIYKGLAPAAAGSAPTAALFF), 99 to 119 (MAAASAAEVLACLIRVPVEIA), 152 to 172 (RGFGSTIMREIPFSLIQFPLW), 190 to 210 (FSVALCGAVAGGISAGLTTPL), and 248 to 268 (FAGFVPRVLWITLGGAFFFGF).

Belongs to the mitochondrial carrier (TC 2.A.29) family.

It is found in the mitochondrion inner membrane. In terms of biological role, mitochondrial solute carriers shuttle metabolites, nucleotides, and cofactors through the mitochondrial inner membrane. May mediate the transport of S-adenosylmethionine (SAM) into the mitochondria. The protein is S-adenosylmethionine mitochondrial carrier protein homolog of Drosophila melanogaster (Fruit fly).